We begin with the raw amino-acid sequence, 339 residues long: MNIGIVNDLPLAVEALRRVIALRADHRVLWVATDGDEAVDFCVAHPPDVVLMDLVMPKVDGVAATRRIMARAPCAILIVTASVSANTSSVYEAMGAGALDAVDTPTLALGLSTDASPQALLAKIDQIGRLLESRTTALVPPGPAPTRGQPTLVAIGASAGGPTALTALLRALPADFPAAIVIVQHVDQAFAYGMAEWLDGYTRLPVRVARQGSVPEAGAVLLAATNDHLMLSPRGVLGYTRHPAETPYRPSIDVFFNSVADGWQGDALGVLLTGMGRDGALGLKAMRAKGCYTIAQDQATSAVYGMPKAAAAIGAASAILPLDQIAPQLIARIALTSRD.

The Response regulatory domain maps to 2 to 119 (NIGIVNDLPL…GLSTDASPQA (118 aa)). D53 bears the 4-aspartylphosphate mark. Positions 141-336 (PGPAPTRGQP…PQLIARIALT (196 aa)) constitute a CheB-type methylesterase domain. Catalysis depends on residues S158, H185, and D278.

This sequence belongs to the CheB family. Phosphorylated by CheA. Phosphorylation of the N-terminal regulatory domain activates the methylesterase activity.

The protein localises to the cytoplasm. It catalyses the reaction [protein]-L-glutamate 5-O-methyl ester + H2O = L-glutamyl-[protein] + methanol + H(+). The enzyme catalyses L-glutaminyl-[protein] + H2O = L-glutamyl-[protein] + NH4(+). In terms of biological role, involved in chemotaxis. Part of a chemotaxis signal transduction system that modulates chemotaxis in response to various stimuli. Catalyzes the demethylation of specific methylglutamate residues introduced into the chemoreceptors (methyl-accepting chemotaxis proteins or MCP) by CheR. Also mediates the irreversible deamidation of specific glutamine residues to glutamic acid. This chain is Protein-glutamate methylesterase/protein-glutamine glutaminase 3, found in Burkholderia orbicola (strain AU 1054).